Reading from the N-terminus, the 421-residue chain is 4-hydroxy-3-methylbut-2-en-1-yl diphosphate synthase (flavodoxin) (421 aa).

4 residues coordinate [4Fe-4S] cluster: cysteine 311, cysteine 314, cysteine 357, and glutamate 364.

Belongs to the IspG family. It depends on [4Fe-4S] cluster as a cofactor.

It catalyses the reaction (2E)-4-hydroxy-3-methylbut-2-enyl diphosphate + oxidized [flavodoxin] + H2O + 2 H(+) = 2-C-methyl-D-erythritol 2,4-cyclic diphosphate + reduced [flavodoxin]. It participates in isoprenoid biosynthesis; isopentenyl diphosphate biosynthesis via DXP pathway; isopentenyl diphosphate from 1-deoxy-D-xylulose 5-phosphate: step 5/6. Its function is as follows. Converts 2C-methyl-D-erythritol 2,4-cyclodiphosphate (ME-2,4cPP) into 1-hydroxy-2-methyl-2-(E)-butenyl 4-diphosphate. The sequence is that of 4-hydroxy-3-methylbut-2-en-1-yl diphosphate synthase (flavodoxin) from Xanthomonas euvesicatoria pv. vesicatoria (strain 85-10) (Xanthomonas campestris pv. vesicatoria).